The following is a 349-amino-acid chain: RxLR effector protein CRE15 (349 aa).

The signal sequence occupies residues 1 to 33 (MITFKRLSSARWGALLTSIAVLFFLAITKGADA). The short motif at 46–62 (RRLRTTTADAYYASEDR) is the RxLR-dEER element.

Belongs to the RxLR effector family. In terms of assembly, interacts directly with the potato ortholog of vascular highway 1 (VH1)-interacting kinase (VIK), encoding a predicted MEK kinase (MAP3K).

Its subcellular location is the secreted. It localises to the host cell membrane. Effector that promotes P.infestans virulence in Nicotiana benthamiana and potato. Attenuates cell death triggered by the pathogen-associated molecular pattern infestin 1 (INF1), indicating that the effector suppresses pattern-triggered immunity. However, it does not attenuate cell death triggered by a range of resistance proteins, suggesting that it specifically suppresses INF1-triggered cell death (ICD). Targets host MAP3K VIK in order to utilize or promote its ability to negatively regulate immunity. In Phytophthora infestans (strain T30-4) (Potato late blight agent), this protein is RxLR effector protein CRE15.